The sequence spans 253 residues: 5'/3'-nucleotidase SurE (253 aa).

4 residues coordinate a divalent metal cation: Asp8, Asp9, Ser39, and Asn92.

The protein belongs to the SurE nucleotidase family. It depends on a divalent metal cation as a cofactor.

Its subcellular location is the cytoplasm. It catalyses the reaction a ribonucleoside 5'-phosphate + H2O = a ribonucleoside + phosphate. The enzyme catalyses a ribonucleoside 3'-phosphate + H2O = a ribonucleoside + phosphate. The catalysed reaction is [phosphate](n) + H2O = [phosphate](n-1) + phosphate + H(+). Nucleotidase with a broad substrate specificity as it can dephosphorylate various ribo- and deoxyribonucleoside 5'-monophosphates and ribonucleoside 3'-monophosphates with highest affinity to 3'-AMP. Also hydrolyzes polyphosphate (exopolyphosphatase activity) with the preference for short-chain-length substrates (P20-25). Might be involved in the regulation of dNTP and NTP pools, and in the turnover of 3'-mononucleotides produced by numerous intracellular RNases (T1, T2, and F) during the degradation of various RNAs. This Escherichia coli O17:K52:H18 (strain UMN026 / ExPEC) protein is 5'/3'-nucleotidase SurE.